A 210-amino-acid chain; its full sequence is Viral protein 1 (210 aa).

The sequence is that of Viral protein 1 from Chaetoceros (Chaetoceros sp. DNA virus 7).